Here is a 101-residue protein sequence, read N- to C-terminus: Small ribosomal subunit protein uS14 (101 aa).

Belongs to the universal ribosomal protein uS14 family. In terms of assembly, part of the 30S ribosomal subunit. Contacts proteins S3 and S10.

In terms of biological role, binds 16S rRNA, required for the assembly of 30S particles and may also be responsible for determining the conformation of the 16S rRNA at the A site. The protein is Small ribosomal subunit protein uS14 of Pseudomonas syringae pv. syringae (strain B728a).